Reading from the N-terminus, the 357-residue chain is 3-isopropylmalate dehydrogenase (357 aa).

Arg-97, Arg-107, Arg-135, and Asp-224 together coordinate substrate. Residues Asp-224, Asp-248, and Asp-252 each contribute to the Mg(2+) site. 282–294 contributes to the NAD(+) binding site; the sequence is GSAPDIAGQDKAN.

This sequence belongs to the isocitrate and isopropylmalate dehydrogenases family. LeuB type 1 subfamily. Homodimer. The cofactor is Mg(2+). Mn(2+) is required as a cofactor.

The protein localises to the cytoplasm. The catalysed reaction is (2R,3S)-3-isopropylmalate + NAD(+) = 4-methyl-2-oxopentanoate + CO2 + NADH. Its pathway is amino-acid biosynthesis; L-leucine biosynthesis; L-leucine from 3-methyl-2-oxobutanoate: step 3/4. Functionally, catalyzes the oxidation of 3-carboxy-2-hydroxy-4-methylpentanoate (3-isopropylmalate) to 3-carboxy-4-methyl-2-oxopentanoate. The product decarboxylates to 4-methyl-2 oxopentanoate. This chain is 3-isopropylmalate dehydrogenase, found in Synechococcus sp. (strain CC9902).